The following is a 497-amino-acid chain: Maintenance of mitochondrial morphology protein 1 (497 aa).

Residues 1–28 lie on the Lumenal side of the membrane; that stretch reads MSSVLNPSSPHSWDLCCSSSSNRSYHRP. Residues 29–55 form a helical membrane-spanning segment; the sequence is THPIVGLLVGQLSVVLLIGAFIKFFIF. Residues 56 to 497 are Cytoplasmic-facing; sequence GEAPPSPSRS…GSLPDAVPIT (442 aa). Disordered regions lie at residues 60 to 107, 284 to 330, 402 to 421, and 437 to 497; these read PSPS…SSST, ESST…STTG, TGVR…AAGV, and EMLH…VPIT. Positions 66-77 are enriched in basic residues; sequence QTHRTSQHKRSY. Basic and acidic residues predominate over residues 81–94; the sequence is GARDLSPRTLKEKP. 3 stretches are compositionally biased toward polar residues: residues 95-107, 284-302, and 311-330; these read SSNV…SSST, ESST…NLRS, and PQES…STTG. Positions 140–393 constitute an SMP-LTD domain; it reads QPESLDWFNV…EPRVQVVALP (254 aa). Residues 412–421 show a composition bias toward low complexity; the sequence is DVSSSDAAGV. Positions 440 to 451 are enriched in basic and acidic residues; that stretch reads HAAREVDAEGLR. Positions 462 to 473 are enriched in polar residues; the sequence is GSSSKYAQQNQS. Residues 474–484 are compositionally biased toward basic and acidic residues; the sequence is SRERGRADDPF.

The protein belongs to the MMM1 family. In terms of assembly, homodimer. Component of the ER-mitochondria encounter structure (ERMES) or MDM complex, composed of MMM1, MDM10, MDM12 and MDM34. An MMM1 homodimer associates with one molecule of MDM12 on each side in a pairwise head-to-tail manner, and the SMP-LTD domains of MMM1 and MDM12 generate a continuous hydrophobic tunnel for phospholipid trafficking.

The protein localises to the endoplasmic reticulum membrane. Its function is as follows. Component of the ERMES/MDM complex, which serves as a molecular tether to connect the endoplasmic reticulum (ER) and mitochondria. Components of this complex are involved in the control of mitochondrial shape and protein biogenesis, and function in nonvesicular lipid trafficking between the ER and mitochondria. The MDM12-MMM1 subcomplex functions in the major beta-barrel assembly pathway that is responsible for biogenesis of all outer membrane beta-barrel proteins, and acts in a late step after the SAM complex. The MDM10-MDM12-MMM1 subcomplex further acts in the TOM40-specific pathway after the action of the MDM12-MMM1 complex. Essential for establishing and maintaining the structure of mitochondria and maintenance of mtDNA nucleoids. The polypeptide is Maintenance of mitochondrial morphology protein 1 (Uncinocarpus reesii (strain UAMH 1704)).